We begin with the raw amino-acid sequence, 462 residues long: 3-isopropylmalate dehydratase large subunit (462 aa).

Positions 337, 397, and 400 each coordinate [4Fe-4S] cluster.

This sequence belongs to the aconitase/IPM isomerase family. LeuC type 1 subfamily. As to quaternary structure, heterodimer of LeuC and LeuD. It depends on [4Fe-4S] cluster as a cofactor.

The enzyme catalyses (2R,3S)-3-isopropylmalate = (2S)-2-isopropylmalate. It participates in amino-acid biosynthesis; L-leucine biosynthesis; L-leucine from 3-methyl-2-oxobutanoate: step 2/4. Catalyzes the isomerization between 2-isopropylmalate and 3-isopropylmalate, via the formation of 2-isopropylmaleate. This Listeria monocytogenes serotype 4b (strain CLIP80459) protein is 3-isopropylmalate dehydratase large subunit.